The sequence spans 184 residues: Large ribosomal subunit protein uL18 (184 aa).

Belongs to the universal ribosomal protein uL18 family. In terms of assembly, part of the 50S ribosomal subunit. Contacts the 5S and 23S rRNAs.

Its function is as follows. This is one of the proteins that bind and probably mediate the attachment of the 5S RNA into the large ribosomal subunit, where it forms part of the central protuberance. The polypeptide is Large ribosomal subunit protein uL18 (Natronomonas pharaonis (strain ATCC 35678 / DSM 2160 / CIP 103997 / JCM 8858 / NBRC 14720 / NCIMB 2260 / Gabara) (Halobacterium pharaonis)).